A 618-amino-acid polypeptide reads, in one-letter code: Camphene synthase, chloroplastic (618 aa).

A chloroplast-targeting transit peptide spans 1-51; that stretch reads MALLSITPLVSRSCLSSSHEIKALRRTIPTLGICRPGKSVAHSINMCLTSV. Residues Asp369, Asp373, and Asp521 each contribute to the Mg(2+) site. The short motif at 369–373 is the DDXXD motif element; sequence DDMYD.

This sequence belongs to the terpene synthase family. Tpsd subfamily. Requires Mg(2+) as cofactor. Mn(2+) is required as a cofactor. The cofactor is K(+).

Its subcellular location is the plastid. The protein resides in the chloroplast. It catalyses the reaction (2E)-geranyl diphosphate = (1S,4R)-camphene + diphosphate. Its pathway is terpene metabolism; oleoresin biosynthesis. Functionally, involved in defensive oleoresin formation in conifers in response to insect attack or other injury. Involved in monoterpene (C10) olefins biosynthesis. The chain is Camphene synthase, chloroplastic (ag6) from Abies grandis (Grand fir).